The chain runs to 347 residues: NADH-ubiquinone oxidoreductase chain 2 (347 aa).

The next 11 helical transmembrane spans lie at 3–23 (PIIF…VMIS), 25–45 (HWLR…PIMM), 66–86 (ASML…QWTV), 96–116 (MLMT…FWVP), 122–142 (IPLS…MSVL), 145–165 (ILPS…IMIG), 178–198 (IMAY…PYNP), 200–220 (MMLL…LLFM), 237–257 (MPIM…LPPL), 274–294 (NSII…YFYM), and 325–345 (LLPT…ILSI).

It belongs to the complex I subunit 2 family. In terms of assembly, core subunit of respiratory chain NADH dehydrogenase (Complex I) which is composed of 45 different subunits. Interacts with TMEM242.

The protein resides in the mitochondrion inner membrane. It catalyses the reaction a ubiquinone + NADH + 5 H(+)(in) = a ubiquinol + NAD(+) + 4 H(+)(out). Its function is as follows. Core subunit of the mitochondrial membrane respiratory chain NADH dehydrogenase (Complex I) which catalyzes electron transfer from NADH through the respiratory chain, using ubiquinone as an electron acceptor. Essential for the catalytic activity and assembly of complex I. In Capra hircus (Goat), this protein is NADH-ubiquinone oxidoreductase chain 2.